The chain runs to 126 residues: Small ribosomal subunit protein uS13 (126 aa).

The segment at 92 to 126 (RMGLPVRGQRTRTNARTRRGGRRTVAGKKKAPAKK) is disordered. Residues 100–126 (QRTRTNARTRRGGRRTVAGKKKAPAKK) are compositionally biased toward basic residues.

It belongs to the universal ribosomal protein uS13 family. As to quaternary structure, part of the 30S ribosomal subunit. Forms a loose heterodimer with protein S19. Forms two bridges to the 50S subunit in the 70S ribosome.

Located at the top of the head of the 30S subunit, it contacts several helices of the 16S rRNA. In the 70S ribosome it contacts the 23S rRNA (bridge B1a) and protein L5 of the 50S subunit (bridge B1b), connecting the 2 subunits; these bridges are implicated in subunit movement. Contacts the tRNAs in the A and P-sites. This Cyanothece sp. (strain PCC 7425 / ATCC 29141) protein is Small ribosomal subunit protein uS13.